The sequence spans 295 residues: Light-independent protochlorophyllide reductase iron-sulfur ATP-binding protein (295 aa).

Residues 39–44 (GIGKST) and lysine 68 each bind ATP. Residue serine 43 coordinates Mg(2+). [4Fe-4S] cluster is bound by residues cysteine 124 and cysteine 158. 209-210 (NR) serves as a coordination point for ATP.

The protein belongs to the NifH/BchL/ChlL family. In terms of assembly, homodimer. Protochlorophyllide reductase is composed of three subunits; ChlL, ChlN and ChlB. Requires [4Fe-4S] cluster as cofactor.

It carries out the reaction chlorophyllide a + oxidized 2[4Fe-4S]-[ferredoxin] + 2 ADP + 2 phosphate = protochlorophyllide a + reduced 2[4Fe-4S]-[ferredoxin] + 2 ATP + 2 H2O. It functions in the pathway porphyrin-containing compound metabolism; chlorophyll biosynthesis (light-independent). In terms of biological role, component of the dark-operative protochlorophyllide reductase (DPOR) that uses Mg-ATP and reduced ferredoxin to reduce ring D of protochlorophyllide (Pchlide) to form chlorophyllide a (Chlide). This reaction is light-independent. The L component serves as a unique electron donor to the NB-component of the complex, and binds Mg-ATP. The polypeptide is Light-independent protochlorophyllide reductase iron-sulfur ATP-binding protein (Prochlorococcus marinus (strain MIT 9215)).